Consider the following 89-residue polypeptide: MANKSKLAKQKQREKTVEKYAAKRAELKAAGDYYGLTQLPRDASPTRLHNRCEFTGRPRGYVRFFGVSRIVLREMAHRGELPGVKKASW.

The protein belongs to the universal ribosomal protein uS14 family. As to quaternary structure, part of the 30S ribosomal subunit. Contacts proteins S3 and S10.

In terms of biological role, binds 16S rRNA, required for the assembly of 30S particles and may also be responsible for determining the conformation of the 16S rRNA at the A site. The polypeptide is Small ribosomal subunit protein uS14 (Deinococcus radiodurans (strain ATCC 13939 / DSM 20539 / JCM 16871 / CCUG 27074 / LMG 4051 / NBRC 15346 / NCIMB 9279 / VKM B-1422 / R1)).